A 141-amino-acid polypeptide reads, in one-letter code: Nucleoside diphosphate kinase (141 aa).

Residues lysine 11, phenylalanine 59, arginine 87, threonine 93, arginine 104, and asparagine 114 each contribute to the ATP site. Histidine 117 (pros-phosphohistidine intermediate) is an active-site residue.

This sequence belongs to the NDK family. In terms of assembly, homotetramer. It depends on Mg(2+) as a cofactor.

The protein resides in the cytoplasm. The enzyme catalyses a 2'-deoxyribonucleoside 5'-diphosphate + ATP = a 2'-deoxyribonucleoside 5'-triphosphate + ADP. The catalysed reaction is a ribonucleoside 5'-diphosphate + ATP = a ribonucleoside 5'-triphosphate + ADP. Major role in the synthesis of nucleoside triphosphates other than ATP. The ATP gamma phosphate is transferred to the NDP beta phosphate via a ping-pong mechanism, using a phosphorylated active-site intermediate. In Ralstonia nicotianae (strain ATCC BAA-1114 / GMI1000) (Ralstonia solanacearum), this protein is Nucleoside diphosphate kinase.